The primary structure comprises 180 residues: MSNGIVAKRYAVALFKIAKEKHVLEMFEEELRLVQNVYVKNGELHSFLTQPNISKEQKKTFLANVFGSVSESILNTLYILIDNKRIDILPEIADEYVVLANEERNVADATVYSTRLLSEEEKLNIAEAFAKRTGKDAIRVKNVVDEDLLGGIKVRIGNRIYDGSLQGKLARIQRELMKNR.

The protein belongs to the ATPase delta chain family. In terms of assembly, F-type ATPases have 2 components, F(1) - the catalytic core - and F(0) - the membrane proton channel. F(1) has five subunits: alpha(3), beta(3), gamma(1), delta(1), epsilon(1). F(0) has three main subunits: a(1), b(2) and c(10-14). The alpha and beta chains form an alternating ring which encloses part of the gamma chain. F(1) is attached to F(0) by a central stalk formed by the gamma and epsilon chains, while a peripheral stalk is formed by the delta and b chains.

It localises to the cell membrane. In terms of biological role, f(1)F(0) ATP synthase produces ATP from ADP in the presence of a proton or sodium gradient. F-type ATPases consist of two structural domains, F(1) containing the extramembraneous catalytic core and F(0) containing the membrane proton channel, linked together by a central stalk and a peripheral stalk. During catalysis, ATP synthesis in the catalytic domain of F(1) is coupled via a rotary mechanism of the central stalk subunits to proton translocation. Its function is as follows. This protein is part of the stalk that links CF(0) to CF(1). It either transmits conformational changes from CF(0) to CF(1) or is implicated in proton conduction. The protein is ATP synthase subunit delta of Bacillus cereus (strain B4264).